The sequence spans 537 residues: Glutamyl-tRNA(Gln) amidotransferase subunit A, chloroplastic/mitochondrial (537 aa).

Catalysis depends on charge relay system residues lysine 116 and serine 191. Catalysis depends on serine 215, which acts as the Acyl-ester intermediate.

The protein belongs to the amidase family. GatA subfamily. In terms of assembly, subunit of the heterotrimeric GatCAB amidotransferase (AdT) complex, composed of A, B and C subunits.

Its subcellular location is the mitochondrion. It is found in the plastid. It localises to the chloroplast stroma. The enzyme catalyses L-glutamyl-tRNA(Gln) + L-glutamine + ATP + H2O = L-glutaminyl-tRNA(Gln) + L-glutamate + ADP + phosphate + H(+). In terms of biological role, allows the formation of correctly charged Gln-tRNA(Gln) through the transamidation of misacylated Glu-tRNA(Gln) in chloroplasts and mitochondria. The reaction takes place in the presence of glutamine and ATP through an activated gamma-phospho-Glu-tRNA(Gln). This is Glutamyl-tRNA(Gln) amidotransferase subunit A, chloroplastic/mitochondrial from Arabidopsis thaliana (Mouse-ear cress).